The sequence spans 350 residues: GTPase Obg (350 aa).

Residues 1–159 (MKLVDEAEIE…RTLKLELKLL (159 aa)) form the Obg domain. Positions 127–147 (NMHFKSSTNRSPRQALPGEPG) are disordered. Positions 160–337 (ADVGLLGFPN…IMSRIMAFFD (178 aa)) constitute an OBG-type G domain. GTP-binding positions include 166–173 (GFPNAGKS), 191–195 (FTTLY), 213–216 (DIPG), 287–290 (NKAD), and 318–320 (SAL). Mg(2+) contacts are provided by S173 and T193.

It belongs to the TRAFAC class OBG-HflX-like GTPase superfamily. OBG GTPase family. In terms of assembly, monomer. It depends on Mg(2+) as a cofactor.

The protein resides in the cytoplasm. Its function is as follows. An essential GTPase which binds GTP, GDP and possibly (p)ppGpp with moderate affinity, with high nucleotide exchange rates and a fairly low GTP hydrolysis rate. Plays a role in control of the cell cycle, stress response, ribosome biogenesis and in those bacteria that undergo differentiation, in morphogenesis control. This is GTPase Obg from Stenotrophomonas maltophilia (strain R551-3).